A 96-amino-acid chain; its full sequence is Prokineticin Bm8-b (96 aa).

Residues 1–19 (MKCFAQIVVLLLVIAFSHG) form the signal peptide. Cystine bridges form between cysteine 32–cysteine 50, cysteine 37–cysteine 78, cysteine 60–cysteine 86, and cysteine 80–cysteine 95.

The protein belongs to the AVIT (prokineticin) family. Expressed by the skin glands.

The protein localises to the secreted. Functionally, potent agonist for both PKR1/PROKR1 and PKR2/PROKR2, and inducer of a potent and long-lasting hyperalgesia. Also potentiates capsaicin-induced TRPV1 current, when tested on DRG neurons. At subnanomolar concentrations, this protein both induces potent chemotaxis of macrophages and stimulates LPS-induced production of the pro-inflammatory cytokines IL-1 and IL-12. In vivo, potently stimulates the contraction of the guinea-pig gastrointestinal (GI) smooth muscle (nanomolar concentration). This chain is Prokineticin Bm8-b, found in Bombina maxima (Giant fire-bellied toad).